Reading from the N-terminus, the 153-residue chain is ATP synthase subunit b' (153 aa).

The helical transmembrane segment at 23 to 40 (LMAIQVVALTYILNSLFF) threads the bilayer.

The protein belongs to the ATPase B chain family. In terms of assembly, F-type ATPases have 2 components, F(1) - the catalytic core - and F(0) - the membrane proton channel. F(1) has five subunits: alpha(3), beta(3), gamma(1), delta(1), epsilon(1). F(0) has four main subunits: a(1), b(1), b'(1) and c(10-14). The alpha and beta chains form an alternating ring which encloses part of the gamma chain. F(1) is attached to F(0) by a central stalk formed by the gamma and epsilon chains, while a peripheral stalk is formed by the delta, b and b' chains.

Its subcellular location is the cellular thylakoid membrane. Its function is as follows. F(1)F(0) ATP synthase produces ATP from ADP in the presence of a proton or sodium gradient. F-type ATPases consist of two structural domains, F(1) containing the extramembraneous catalytic core and F(0) containing the membrane proton channel, linked together by a central stalk and a peripheral stalk. During catalysis, ATP synthesis in the catalytic domain of F(1) is coupled via a rotary mechanism of the central stalk subunits to proton translocation. In terms of biological role, component of the F(0) channel, it forms part of the peripheral stalk, linking F(1) to F(0). The b'-subunit is a diverged and duplicated form of b found in plants and photosynthetic bacteria. The polypeptide is ATP synthase subunit b' (Prochlorococcus marinus (strain MIT 9515)).